The sequence spans 333 residues: E3 ubiquitin-protein ligase MIR1 (333 aa).

Residues Met-1 to Arg-60 form an RING-CH-type zinc finger. Residues Met-1–Glu-82 are Cytoplasmic-facing. The Zn(2+) site is built by Cys-9, Cys-12, Cys-24, Cys-26, His-34, Cys-37, Cys-50, and Cys-53. Residues Leu-83–Val-103 form a helical membrane-spanning segment. Residues Trp-104 to Ala-121 lie on the Extracellular side of the membrane. The helical transmembrane segment at Ala-122–Phe-142 threads the bilayer. Over His-143–His-333 the chain is Cytoplasmic. The segment at Gly-187 to Ala-257 is disordered. A compositionally biased stretch (low complexity) spans Pro-195–Ala-221. A compositionally biased stretch (basic and acidic residues) spans Ala-235–Asn-252.

In terms of assembly, binds human MHC-I and CD1D.

Its subcellular location is the host cell membrane. The protein resides in the host endoplasmic reticulum. It carries out the reaction [E2 ubiquitin-conjugating enzyme]-S-ubiquitinyl-L-cysteine + [acceptor protein]-L-cysteine = [E2 ubiquitin-conjugating enzyme]-L-cysteine + [acceptor protein]-S-ubiquitinyl-L-cysteine.. The protein operates within protein modification; protein ubiquitination. Membrane-bound E3 ubiquitin ligase expressed during late stages of lytic replication to mediate polyubiquitination of various host membrane proteins related to the immune response. Promotes ubiquitination and subsequent degradation of host MHC-I and CD1D molecules, DC-SIGN and DC-SIGNR, presumably to prevent lysis of infected cells by cytotoxic T-lymphocytes. Binds target molecules through transmembrane interaction. E3 ubiquitin-protein ligases accept ubiquitin from specific E2 ubiquitin-conjugating enzymes, and then transfer it to target protein. The result of this ubiquitination is the enhancement of the endocytosis of the target chain and the delivery to the lysosome, where it is proteolytically destroyed. Induces ubiquitination not only on lysines, but also on cysteine residues. This Human herpesvirus 8 type P (isolate GK18) (HHV-8) protein is E3 ubiquitin-protein ligase MIR1 (K3).